Reading from the N-terminus, the 346-residue chain is Histidinol-phosphate aminotransferase (346 aa).

K209 is subject to N6-(pyridoxal phosphate)lysine.

This sequence belongs to the class-II pyridoxal-phosphate-dependent aminotransferase family. Histidinol-phosphate aminotransferase subfamily. In terms of assembly, homodimer. Pyridoxal 5'-phosphate serves as cofactor.

It carries out the reaction L-histidinol phosphate + 2-oxoglutarate = 3-(imidazol-4-yl)-2-oxopropyl phosphate + L-glutamate. The protein operates within amino-acid biosynthesis; L-histidine biosynthesis; L-histidine from 5-phospho-alpha-D-ribose 1-diphosphate: step 7/9. The polypeptide is Histidinol-phosphate aminotransferase (Vibrio vulnificus (strain CMCP6)).